The sequence spans 527 residues: Peptide chain release factor 3 (527 aa).

The 270-residue stretch at 9–278 (NKRRTFAIIS…GLTQWAPKPQ (270 aa)) folds into the tr-type G domain. GTP is bound by residues 18 to 25 (SHPDAGKT), 86 to 90 (DTPGH), and 140 to 143 (NKLD).

The protein belongs to the TRAFAC class translation factor GTPase superfamily. Classic translation factor GTPase family. PrfC subfamily.

The protein localises to the cytoplasm. In terms of biological role, increases the formation of ribosomal termination complexes and stimulates activities of RF-1 and RF-2. It binds guanine nucleotides and has strong preference for UGA stop codons. It may interact directly with the ribosome. The stimulation of RF-1 and RF-2 is significantly reduced by GTP and GDP, but not by GMP. The sequence is that of Peptide chain release factor 3 from Haemophilus influenzae (strain PittGG).